Consider the following 163-residue polypeptide: Retinoic acid receptor responder protein 2 (163 aa).

A signal peptide spans 1-20 (MRRLLIPLALWLGAVGVGVA). 3 cysteine pairs are disulfide-bonded: Cys77-Cys87, Cys98-Cys117, and Cys101-Cys135. Positions 158-163 (KALPRS) are excised as a propeptide.

Secreted in an inactive precursor form, prochemerin, which is proteolytically processed by a variety of extracellular proteases to generate forms with differing levels of bioactivity. For example, the removal of six amino acids results in chemerin-157, which exhibits the highest activity, while removal of seven amino acids results in chemerin-156 which has slightly less activity. Some proteases are able to cleave at more than one site and chemerin forms may be sequentially processed by different enzymes to modulate activity levels. The coordinated expression and activity of chemerin-modifying enzymes is essential for regulating its bioactivation, inactivation and, consequently, biological function. Cathepsin G cleaves seven C-terminal amino acids from prochemerin (chemerin-156), elastase is able to cleave six (chemerin-157), eight (chemerin-155) or eleven (chemerin-152), plasmin cleaves five amino acids (chemerin-158), and tryptase cleaves five (chemerin-158) or eight (chemerin-155). Multiple cleavages might be required to fully activate chemerin, with an initial tryptase cleavage resulting in chemerin with low activity (chemerin-158), and a second cleavage by carboxypeptidase N or B producing highly active chemerin (chemerin-157). As to expression, expressed at the highest levels in placenta, liver, and white adipose tissue (WAT), and to a lesser extent in many other tissues such as lung, brown adipose tissue, heart, ovary, kidney, skeletal muscle and pancreas. Within WAT, expression is enriched in adipocytes as compared to the stromal vascular fraction. Expression and secretion increases dramatically with adipogenesis. Highly expressed in skin (basal and suprabasal layers of the epidermis, hair follicles and endothelial cells). Expression is elevated in numerous metabolic and inflammatory diseases including psoriasis, obesity, type 2 diabetes, metabolic syndrome and cardiovascular disease.

It localises to the secreted. Its function is as follows. Adipocyte-secreted protein (adipokine) that regulates adipogenesis, metabolism and inflammation through activation of the chemokine-like receptor 1 (CMKLR1). Also acts as a ligand for CMKLR2. Can also bind to C-C chemokine receptor-like 2 (CCRL2), but with a lower affinity than it does to CMKLR1 or CMKLR2. Positively regulates adipocyte differentiation, modulates the expression of adipocyte genes involved in lipid and glucose metabolism and might play a role in angiogenesis, a process essential for the expansion of white adipose tissue. Also acts as a pro-inflammatory adipokine, causing an increase in secretion of pro-inflammatory and prodiabetic adipokines, which further impair adipose tissue metabolic function and have negative systemic effects including impaired insulin sensitivity, altered glucose and lipid metabolism, and a decrease in vascular function in other tissues. Can have both pro- and anti-inflammatory properties depending on the modality of enzymatic cleavage by different classes of proteases. Acts as a chemotactic factor for leukocyte populations expressing CMKLR1, particularly immature plasmacytoid dendritic cells, but also immature myeloid DCs, macrophages and natural killer cells. Exerts an anti-inflammatory role by preventing TNF/TNFA-induced VCAM1 expression and monocytes adhesion in vascular endothelial cells. The effect is mediated via inhibiting activation of NF-kappa-B and CRK/p38 through stimulation of AKT1/NOS3 signaling and nitric oxide production. Its dual role in inflammation and metabolism might provide a link between chronic inflammation and obesity, as well as obesity-related disorders such as type 2 diabetes and cardiovascular disease. Exhibits an antimicrobial function in the skin. The polypeptide is Retinoic acid receptor responder protein 2 (RARRES2) (Homo sapiens (Human)).